Reading from the N-terminus, the 450-residue chain is MKDSYFDLNTFWKGIQGRFAANMGETAYENWIKPVRAVKVDLANRTVELQAPNDIVMQAWDNGNYTAKFMEYAYDVAHDFFKPELKVIKVVANPVNNQKSNQSNSDFVATDYQLNQNFTFDTWVIGDANELATSAAMAVSEQPGRQYNPLLIYGSSGLGKTHLMEAIGNRLKELQPDAIVRYITTDDFMNDWVNAISKKTTADFTSTYENVDLLLVDDIQMLQGKDRFQEEFFNIFNKITKSQKQIVMTSDVLPKDIPGLNARLVSRFMQGVAYDIQKPDFPTRLAILKNKSEEVGISIDNQTLTLIAEQIDTNVRELEGAFNTLTLMARAGRPINVSNAQKILEHLNITRQKVITLPDIQKTVADDYNVSINDLIGKKRNSDIVLPRQVAMYLIRTLTDTSLPKIGQAFGGRDHTTVMHGTEKIADLIETDYALKQRIENLSTKIKEKS.

Positions 1-79 (MKDSYFDLNT…MEYAYDVAHD (79 aa)) are domain I, interacts with DnaA modulators. The domain II stretch occupies residues 79–112 (DFFKPELKVIKVVANPVNNQKSNQSNSDFVATDY). A domain III, AAA+ region region spans residues 113–329 (QLNQNFTFDT…GAFNTLTLMA (217 aa)). 4 residues coordinate ATP: Gly-157, Gly-159, Lys-160, and Thr-161. The tract at residues 330-450 (RAGRPINVSN…NLSTKIKEKS (121 aa)) is domain IV, binds dsDNA.

Belongs to the DnaA family. In terms of assembly, oligomerizes as a right-handed, spiral filament on DNA at oriC.

The protein localises to the cytoplasm. Functionally, plays an essential role in the initiation and regulation of chromosomal replication. ATP-DnaA binds to the origin of replication (oriC) to initiate formation of the DNA replication initiation complex once per cell cycle. Binds the DnaA box (a 9 base pair repeat at the origin) and separates the double-stranded (ds)DNA. Forms a right-handed helical filament on oriC DNA; dsDNA binds to the exterior of the filament while single-stranded (ss)DNA is stabiized in the filament's interior. The ATP-DnaA-oriC complex binds and stabilizes one strand of the AT-rich DNA unwinding element (DUE), permitting loading of DNA polymerase. After initiation quickly degrades to an ADP-DnaA complex that is not apt for DNA replication. Binds acidic phospholipids. The chain is Chromosomal replication initiator protein DnaA from Oenococcus oeni (strain ATCC BAA-331 / PSU-1).